A 1140-amino-acid polypeptide reads, in one-letter code: Envelopment polyprotein (1140 aa).

Positions 1 to 17 are cleaved as a signal peptide; sequence MVGWVCISLVVLATTTA. Residues 18 to 489 are Lumenal-facing; it reads GLTRNLYELK…VPGLHGWATT (472 aa). Cystine bridges form between Cys30–Cys155, Cys64–Cys161, Cys113–Cys132, Cys137–Cys142, Cys179–Cys189, and Cys214–Cys251. A glycan (N-linked (GlcNAc...) asparagine; by host) is linked at Asn138. Residue Asn351 is glycosylated (N-linked (GlcNAc...) asparagine; by host). 4 disulfide bridges follow: Cys380–Cys439, Cys384–Cys393, Cys409–Cys428, and Cys456–Cys479. N-linked (GlcNAc...) asparagine; by host glycosylation is present at Asn403. A helical transmembrane segment spans residues 490-510; it reads ALLITFCFGWLLIPTITMIIL. Residues 511–631 are Cytoplasmic-facing; that stretch reads KILRLLTFSC…LGVFRYKSRC (121 aa). The tract at residues 520 to 537 is binding to the ribonucleoprotein; it reads CSHYSTESKFKAILERVK. 2 consecutive CCHC-type zinc fingers follow at residues 549–569 and 574–595; these read CDVCHHECETAKELETHKKSC and CPYCMTMTESTESALQAHFSIC. Binding to the ribonucleoprotein stretches follow at residues 592–609, 596–607, and 615–629; these read FSICKLTNRFQENLKKSL, KLTNRFQENLKK, and KQGCYRTLGVFRYKS. Positions 611–638 are interaction with host TRAF3; it reads RPEVKQGCYRTLGVFRYKSRCYVGLVWG. The ITAM domain occupies 615–638; that stretch reads KQGCYRTLGVFRYKSRCYVGLVWG. Phosphotyrosine; by host is present on residues Tyr619 and Tyr632. A YxxL motif is present at residues 619 to 622; the sequence is YRTL. A helical membrane pass occupies residues 632-652; the sequence is YVGLVWGVLLTTELIVWAASA. The Lumenal portion of the chain corresponds to 653–1108; sequence DTPLMESGWS…EWLLGILNGN (456 aa). 8 disulfide bridges follow: Cys739–Cys774, Cys743–Cys781, Cys755–Cys888, Cys769–Cys899, Cys784–Cys907, Cys810–Cys819, Cys827–Cys836, and Cys867–Cys871. A fusion loop region spans residues 761-781; it reads YQYETSWGCNPPDCPGVGTGC. Asn931 is a glycosylation site (N-linked (GlcNAc...) asparagine; by host). 5 cysteine pairs are disulfide-bonded: Cys973–Cys1003, Cys996–Cys1048, Cys1013–Cys1018, Cys1049–Cys1054, and Cys1088–Cys1092. The helical transmembrane segment at 1109-1129 threads the bilayer; that stretch reads WVVVAVLIVILILSILLFSFF. The interval 1125–1140 is binding to the ribonucleoprotein; the sequence is LFSFFCPIRGRKNKSN. The Cytoplasmic segment spans residues 1130 to 1140; that stretch reads CPIRGRKNKSN.

Belongs to the hantavirus envelope glycoprotein family. As to quaternary structure, homodimer. Homotetramer; forms heterotetrameric Gn-Gc spikes in the pre-fusion conformation. Interacts (via C-terminus) with the nucleoprotein. Interacts with host TUFM; this interaction contributes to the virus-induced degradation of mitochondria by autophagy, which leads to degradation of host MAVS and inhibition of type I interferon (IFN) responses. Interacts with host MAP1LC3B; this interaction contributes to the virus-induced degradation of mitochondria by autophagy, which leads to degradation of host MAVS and inhibition of type I interferon (IFN) responses. Interacts (via C-terminus) with host TRAF3 (via N-terminus); this interaction inhibits the formation of TRAF3-TBK1 complexes. In terms of assembly, homodimer. Homotetramer; forms heterotetrameric Gn-Gc spikes in the pre-fusion conformation. Homotrimer; forms homotrimer in the post-fusion conformation at acidic pH. Interacts (via C-terminus) with the nucleoprotein. In terms of processing, envelope polyprotein precursor is quickly cleaved in vivo just after synthesis, presumably by host signal peptidase.

The protein resides in the virion membrane. It localises to the host cell surface. Its subcellular location is the host Golgi apparatus membrane. It is found in the host endoplasmic reticulum membrane. The protein localises to the host mitochondrion. Its function is as follows. Forms homotetramers with glycoprotein C at the surface of the virion. Attaches the virion to host cell receptors including integrin ITGAV/ITGB3. This attachment induces virion internalization predominantly through clathrin-dependent endocytosis. Mediates the assembly and budding of infectious virus particles through its interaction with the nucleocapsid protein and the viral genome. May dysregulate normal immune and endothelial cell responses through an ITAM motif. Translocates to mitochondria, binds to host TUFM and recruits MAP1LC3B. These interactions induce mitochondrial autophagy and therefore destruction of host MAVS leading to inhibition of type I interferon (IFN) responses. Concomitant breakdown of glycoprotein N is apparently prevented by the nucleoprotein that may inhibit Gn-stimulated autophagosome-lysosome fusion. Interacts with the viral genomic RNA. Inhibits the host RIG-I/TBK1 pathway by disrupting the formation of TBK1-TRAF3 complexes and downstream signaling responses required for IFN-beta transcription. Functionally, forms homotetramers with glycoprotein N at the surface of the virion. Attaches the virion to host cell receptors including integrin ITGAV/ITGB3. This attachment induces virion internalization predominantly through clathrin-dependent endocytosis. Class II fusion protein that promotes fusion of viral membrane with host endosomal membrane after endocytosis of the virion. This Homo sapiens (Human) protein is Envelopment polyprotein (GP).